The following is a 557-amino-acid chain: NADP-dependent malic enzyme (557 aa).

Y88 functions as the Proton donor in the catalytic mechanism. Position 141 (R141) interacts with NADP(+). K159 serves as the catalytic Proton acceptor. The a divalent metal cation site is built by E231, D232, and D255. Position 255 (D255) interacts with NADP(+). Residue S322 is modified to Phosphoserine. N394 contributes to the NADP(+) binding site.

Belongs to the malic enzymes family. Homotetramer. Requires Mg(2+) as cofactor. The cofactor is Mn(2+).

The protein localises to the cytoplasm. It catalyses the reaction (S)-malate + NADP(+) = pyruvate + CO2 + NADPH. It carries out the reaction oxaloacetate + H(+) = pyruvate + CO2. In terms of biological role, catalyzes the oxidative decarboxylation of (S)-malate in the presence of NADP(+) and divalent metal ions, and decarboxylation of oxaloacetate. The protein is NADP-dependent malic enzyme (ME1) of Sus scrofa (Pig).